The primary structure comprises 314 residues: Mitochondrial thiamine pyrophosphate carrier 1 (314 aa).

Helical transmembrane passes span 14–30 (VAAW…GLLA), 84–100 (LLYV…YSLF), 116–136 (LVVG…FDVL), 170–186 (GSIA…SIMF), 217–233 (SAGT…TFPL), and 285–302 (GILV…VSFW). Solcar repeat units lie at residues 14 to 103 (VAAW…FNRY), 110 to 195 (EARL…IRIY), and 210 to 310 (ELAT…AIHY).

It belongs to the mitochondrial carrier (TC 2.A.29) family.

The protein localises to the mitochondrion inner membrane. Mitochondrial transporter that mediates uptake of thiamine pyrophosphate (ThPP) into mitochondria. This is Mitochondrial thiamine pyrophosphate carrier 1 (TPC1) from Saccharomyces cerevisiae (strain ATCC 204508 / S288c) (Baker's yeast).